The primary structure comprises 427 residues: O-methyltransferase sol2 (427 aa).

Asp281 serves as a coordination point for S-adenosyl-L-methionine. His327 functions as the Proton acceptor in the catalytic mechanism.

It belongs to the class I-like SAM-binding methyltransferase superfamily. Cation-independent O-methyltransferase family. COMT subfamily.

It functions in the pathway phytotoxin biosynthesis. Its function is as follows. O-methyltransferase; part of the gene cluster that mediates the biosynthesis of the phytotoxin solanapyrone, a causal agent of early blight disease of potato and tomato. The prosolanapyrone synthase sol1 is a polyketide synthase that produces the octaketide desmethylprosolanapyrone I via sequential condensations of 7 malonyl-CoA units with one acetyl-CoA unit, and one methylation step. The octaketide backbone is further methylated by the sol2 O-methyltransferase to yield prosolanapyrone I. Prosolanapyrone I is hydroxylated to prosolanapyrone II by the cytochrome P450 monooxygenase sol6. The solanapyrone synthase sol5 then catalyzes the oxidation of prosolanapyrone II and the subsequent Diels Alder cycloisomerization of the product prosolanapyrone III to solanapyrones A and D. Solanapyrones A and D are then converted into solanapyrones B and E, respectively, by the sol3 dehydrogenase. In Alternaria solani, this protein is O-methyltransferase sol2 (sol2).